A 121-amino-acid chain; its full sequence is MGRIFLEHLGGLKLFNCAQCHTNLTNRSQLISTRFTGATGRAYLFKRVVNLTFSNIQERVMLTGRHMVRDVMCKNCGAKLGWMYEFATEESQKYKEGRVILEYALITEAEGFPSEAATTSH.

Positions 13-110 constitute a Yippee domain; sequence KLFNCAQCHT…LEYALITEAE (98 aa). Zn(2+) contacts are provided by C17, C20, C73, and C76.

The protein belongs to the yippee family. As to quaternary structure, interacts with hemolin.

The sequence is that of Protein yippee from Drosophila melanogaster (Fruit fly).